A 231-amino-acid chain; its full sequence is Ion-translocating oxidoreductase complex subunit E (231 aa).

The next 6 helical transmembrane spans lie at 18–38, 39–59, 63–83, 86–106, 125–145, and 182–202; these read ALVQ…ATNA, LGLG…ISTL, TPAE…VSAV, LINA…PLIV, ALSA…MFVL, and PFLL…MLAG.

This sequence belongs to the NqrDE/RnfAE family. As to quaternary structure, the complex is composed of six subunits: RsxA, RsxB, RsxC, RsxD, RsxE and RsxG.

The protein localises to the cell inner membrane. In terms of biological role, part of a membrane-bound complex that couples electron transfer with translocation of ions across the membrane. Required to maintain the reduced state of SoxR. This Escherichia coli O1:K1 / APEC protein is Ion-translocating oxidoreductase complex subunit E.